Reading from the N-terminus, the 77-residue chain is U8-lycotoxin-Ls1b (77 aa).

Residues 1 to 20 (MKLIIFTGLVLFAIVSLIEA) form the signal peptide. Residues 21–26 (QAENEK) constitute a propeptide that is removed on maturation.

This sequence belongs to the neurotoxin 19 (CSTX) family. 08 (U8-Lctx) subfamily. Contains 4 disulfide bonds. As to expression, expressed by the venom gland.

Its subcellular location is the secreted. The chain is U8-lycotoxin-Ls1b from Lycosa singoriensis (Wolf spider).